The following is a 385-amino-acid chain: Tumor protein p53-inducible protein 13 (385 aa).

An N-terminal signal peptide occupies residues 1 to 27 (MVHPPPPPPRLLLVALVGLLSLREVVA). At 28–301 (EPAEEAGTPC…ARGPTPRTEE (274 aa)) the chain is on the extracellular side. A disordered region spans residues 242 to 297 (APVSLTTGGPGGNGRSRTEAQMPSGQGNHGGCACPGQVSPAPRAAGPPRVARGPTP). Low complexity predominate over residues 281–297 (PAPRAAGPPRVARGPTP). A helical membrane pass occupies residues 302-322 (AAWAAMALTFLLVLLTLATLC). The Cytoplasmic segment spans residues 323-385 (TRLHRNFRRS…DSGPDSESSD (63 aa)). Residues 359–369 (SRRIKRSRRRP) show a composition bias toward basic residues. The tract at residues 359-385 (SRRIKRSRRRPLLPPTPDSGPDSESSD) is disordered.

The protein resides in the cell membrane. Its subcellular location is the cytoplasm. In terms of biological role, may act as a tumor suppressor. Inhibits tumor cell growth, when overexpressed. This is Tumor protein p53-inducible protein 13 (Tp53i13) from Mus musculus (Mouse).